The primary structure comprises 412 residues: Double C2-like domain-containing protein beta (412 aa).

The segment at Met-1–Tyr-36 is negatively regulates targeting to plasma membrane. Residues Met-1–Tyr-90 are mediates interaction with DYNLT1. The interval Pro-38–Asp-123 is disordered. Over residues Gly-43–Ala-58 the composition is skewed to pro residues. The span at Pro-59–Asp-74 shows a compositional bias: low complexity. The span at Gly-95 to Lys-108 shows a compositional bias: pro residues. Over residues Asp-112–Asp-123 the composition is skewed to acidic residues. C2 domains lie at Ala-126–Leu-250 and Glu-266–His-399. 9 residues coordinate Ca(2+): Asp-157, Asp-163, Asp-218, Asp-220, Asp-297, Asp-303, Asp-357, Asp-359, and Asp-365. The tract at residues Asp-257–Asn-375 is mediates interaction with STXBP3. Ser-411 is subject to Phosphoserine.

In terms of assembly, interacts with cytoplasmic dynein light chain DYNLT1. May interact with UNC13A; the interaction mediates targeting to the plasma membrane. Probably interacts with the SNARE (soluble N-ethylmaleimide-sensitive factor attached protein receptor) complex composed of SNAP25, STX1A and VAMP2; the interaction is calcium-dependent and competitive with SYT1. Interacts with STX4; the interaction is calcium-dependent, increased by insulin and glucose, and mediates vesicle fusion with plasma membrane in pancreatic cells and adipocytes. Interacts with STXBP3; the interaction is direct, occurs at the cell membrane and regulates glucose-stimulated insulin secretion. Ca(2+) serves as cofactor. Widely expressed. Expressed in pancreatic islet cells (at protein level).

It localises to the cytoplasm. Its subcellular location is the cytoplasmic granule. The protein localises to the cell membrane. In terms of biological role, calcium sensor which positively regulates SNARE-dependent fusion of vesicles with membranes. Binds phospholipids in a calcium-dependent manner and may act at the priming stage of fusion by modifying membrane curvature to stimulate fusion. Involved in calcium-triggered exocytosis in chromaffin cells and calcium-dependent spontaneous release of neurotransmitter in absence of action potentials in neuronal cells. Involved both in glucose-stimulated insulin secretion in pancreatic cells and insulin-dependent GLUT4 transport to the plasma membrane in adipocytes. The protein is Double C2-like domain-containing protein beta (Doc2b) of Mus musculus (Mouse).